A 370-amino-acid chain; its full sequence is Binary larvicide subunit BinA (370 aa).

Residues 1–6 (MRNLDF) constitute a propeptide that is removed on maturation. Positions 1–155 (MRNLDFIDSF…LISNKEQIYL (155 aa)) are beta-trefoil domain. A disulfide bridge links cysteine 31 with cysteine 47. The pore-forming domain stretch occupies residues 156–370 (TLPSLPENEQ…NTKIITDDQN (215 aa)).

The protein belongs to the toxin_10 family. In terms of assembly, forms a heterodimer with BinB. Post-translationally, processed by proteases in the mosquito gut, probably at both the N- and C-termini.

Its subcellular location is the spore. It localises to the perispore. In terms of biological role, component of a binary toxin active against Culex and some Aedes mosquito larvae; mortality towards both C.quinquefasciatus and A.atropalpus is maximal by 48 hours. A.aegypti is not very susceptible to this toxin. Binary toxin internalization into host gut cells requires both proteins. This chain is Binary larvicide subunit BinA (binA), found in Lysinibacillus sphaericus (Bacillus sphaericus).